Consider the following 1134-residue polypeptide: Envelopment polyprotein (1134 aa).

Positions 1–18 (MGIWKWLVMASLVWPVLT) are cleaved as a signal peptide. Over 19-487 (LRNVYDMKIE…GFHGWATAAL (469 aa)) the chain is Lumenal. 8 cysteine pairs are disulfide-bonded: cysteine 29/cysteine 151, cysteine 63/cysteine 157, cysteine 109/cysteine 128, cysteine 133/cysteine 138, cysteine 175/cysteine 185, cysteine 210/cysteine 247, cysteine 234/cysteine 351, and cysteine 380/cysteine 389. Asparagine 134 carries an N-linked (GlcNAc...) asparagine; by host glycan. N-linked (GlcNAc...) asparagine; by host glycans are attached at residues asparagine 235 and asparagine 347. Residue asparagine 399 is glycosylated (N-linked (GlcNAc...) asparagine; by host). Intrachain disulfides connect cysteine 405/cysteine 424 and cysteine 452/cysteine 475. Residues 488-508 (LVTFCFGWVLIPAVTFIILAI) traverse the membrane as a helical segment. Over 509 to 627 (LKFIANIFHT…LNLFRYKSRC (119 aa)) the chain is Cytoplasmic. Residues 516-533 (FHTSNQENRLKSVLRKIK) form a binding to the ribonucleoprotein region. 2 consecutive CCHC-type zinc fingers follow at residues 545–565 (CDVC…GVSC) and 570–591 (CPYC…YKVC). 3 binding to the ribonucleoprotein regions span residues 588–605 (YKVC…KKTV), 592–603 (QVTHRFRDDLKK), and 611–625 (TPGC…RYKS). One can recognise an ITAM domain in the interval 611-634 (TPGCYRTLNLFRYKSRCYIFTMWI). The short motif at 615-618 (YRTL) is the YxxL element. The helical transmembrane segment at 628 to 648 (YIFTMWIFLLVLESILWAASA) threads the bilayer. Residues 649-1104 (SETPLTPVWN…EWISGIFSGN (456 aa)) lie on the Lumenal side of the membrane. Intrachain disulfides connect cysteine 734–cysteine 769, cysteine 738–cysteine 776, cysteine 750–cysteine 884, cysteine 764–cysteine 895, cysteine 779–cysteine 903, cysteine 805–cysteine 814, and cysteine 822–cysteine 831. Positions 756–776 (YQYETSWGCNPSDCPGCGTGC) are fusion loop. Asparagine 927 is a glycosylation site (N-linked (GlcNAc...) asparagine; by host). 5 disulfides stabilise this stretch: cysteine 969-cysteine 999, cysteine 992-cysteine 1044, cysteine 1009-cysteine 1014, cysteine 1045-cysteine 1050, and cysteine 1084-cysteine 1088. The helical transmembrane segment at 1105–1125 (WIVLIVLCVFLLFSLVLLSIL) threads the bilayer. The binding to the ribonucleoprotein stretch occupies residues 1121–1134 (LLSILCPVRKHKKS). Over 1126–1134 (CPVRKHKKS) the chain is Cytoplasmic.

The protein belongs to the hantavirus envelope glycoprotein family. Homodimer. Homotetramer; forms heterotetrameric Gn-Gc spikes in the pre-fusion conformation. Interacts (via C-terminus) with the nucleoprotein. Interacts with host TUFM; this interaction contributes to the virus-induced degradation of mitochondria by autophagy, which leads to degradation of host MAVS and inhibition of type I interferon (IFN) responses. Interacts with host MAP1LC3B; this interaction contributes to the virus-induced degradation of mitochondria by autophagy, which leads to degradation of host MAVS and inhibition of type I interferon (IFN) responses. As to quaternary structure, homodimer. Homotetramer; forms heterotetrameric Gn-Gc spikes in the pre-fusion conformation. Homotrimer; forms homotrimer in the post-fusion conformation at acidic pH. Interacts (via C-terminus) with the nucleoprotein. Post-translationally, envelope polyprotein precursor is quickly cleaved in vivo just after synthesis, presumably by host signal peptidase.

Its subcellular location is the virion membrane. It is found in the host cell surface. The protein localises to the host Golgi apparatus membrane. The protein resides in the host endoplasmic reticulum membrane. It localises to the host mitochondrion. In terms of biological role, forms homotetramers with glycoprotein C at the surface of the virion. Attaches the virion to host cell receptors including integrin ITGAV/ITGB3. This attachment induces virion internalization predominantly through clathrin-dependent endocytosis. May also bind to host C1QBP for virus entry into the host cell. Mediates the assembly and budding of infectious virus particles through its interaction with the nucleocapsid protein and the viral genome. May dysregulate normal immune and endothelial cell responses through an ITAM motif. Translocates to mitochondria, binds to host TUFM and recruits MAP1LC3B. These interactions induce mitochondrial autophagy and therefore destruction of host MAVS leading to inhibition of type I interferon (IFN) responses. Concomitant breakdown of glycoprotein N is apparently prevented by the nucleoprotein that may inhibit Gn-stimulated autophagosome-lysosome fusion. Interacts with the viral genomic RNA. Functionally, forms homotetramers with glycoprotein N at the surface of the virion. Attaches the virion to host cell receptors including integrin ITGAV/ITGB3. This attachment induces virion internalization predominantly through clathrin-dependent endocytosis. May also bind to host C1QBP for virus entry into the host cell. Class II fusion protein that promotes fusion of viral membrane with host endosomal membrane after endocytosis of the virion. The protein is Envelopment polyprotein (GP) of Apodemus agrarius (Eurasian field mouse).